We begin with the raw amino-acid sequence, 472 residues long: Sodium-coupled neutral amino acid transporter 5 (472 aa).

N-acetylmethionine is present on M1. Residues 1–48 (MELQDPKMNGALPSDAVGYRQEREGFLPSRGPAPGSKPVQFMDFEGKT) are Cytoplasmic-facing. The helical transmembrane segment at 49 to 71 (SFGMSVFNLSNAIMGSGILGLAY) threads the bilayer. The Extracellular portion of the chain corresponds to 72–87 (AMAHTGVIFFLALLLC). A helical transmembrane segment spans residues 88–108 (IALLSSYSIHLLLTCAGIAGI). The Cytoplasmic segment spans residues 109-125 (RAYEQLGQRAFGPAGKV). Residues 126–146 (VVATVICLHNVGAMSSYLFII) traverse the membrane as a helical segment. Residues 147-166 (KSELPLVIGTFLYMDPEGDW) are Extracellular-facing. Residues 167–187 (FLKGNLLIIIVSVLIILPLAL) traverse the membrane as a helical segment. The Cytoplasmic portion of the chain corresponds to 188–192 (MKHLG). A helical transmembrane segment spans residues 193–213 (YLGYTSGLSLTCMLFFLVSVI). Residues 214-257 (YKKFQLGCAIGHNETAMESEALVGLPSQGLNSSCEAQMFTVDSQ) lie on the Extracellular side of the membrane. C221 and C247 are oxidised to a cystine. N226 carries N-linked (GlcNAc...) asparagine glycosylation. A helical transmembrane segment spans residues 258 to 278 (MSYTVPIMAFAFVCHPEVLPI). At 279-295 (YTELCRPSKRRMQAVAN) the chain is on the cytoplasmic side. Residues 296-316 (VSIGAMFCMYGLTATFGYLTF) form a helical membrane-spanning segment. Residues 317–334 (YSSVKAEMLHMYSQKDPL) lie on the Extracellular side of the membrane. The chain crosses the membrane as a helical span at residues 335–355 (ILCVRLAVLLAVTLTVPVVLF). The Cytoplasmic segment spans residues 356–376 (PIRRALQQLLFPGKAFSWPRH). A helical transmembrane segment spans residues 377 to 397 (VAIALILLVLVNVLVICVPTI). Residues 398-399 (RD) lie on the Extracellular side of the membrane. A helical membrane pass occupies residues 400-420 (IFGVIGSTSAPSLIFILPSIF). Residues 421-439 (YLRIVPSEVEPFLSWPKIQ) lie on the Cytoplasmic side of the membrane. The chain crosses the membrane as a helical span at residues 440-460 (ALCFGVLGVLFMAVSLGFMFA). Residues 461–472 (NWATGQSRMSGH) lie on the Extracellular side of the membrane.

This sequence belongs to the amino acid/polyamine transporter 2 family. As to expression, predominantly expressed in stomach, brain, liver, lung and intestinal tract.

The protein localises to the cell membrane. The catalysed reaction is L-serine(out) + Na(+)(out) + H(+)(in) = L-serine(in) + Na(+)(in) + H(+)(out). It carries out the reaction L-alanine(out) + Na(+)(out) + H(+)(in) = L-alanine(in) + Na(+)(in) + H(+)(out). The enzyme catalyses glycine(out) + Na(+)(out) + H(+)(in) = glycine(in) + Na(+)(in) + H(+)(out). It catalyses the reaction L-glutamine(out) + Na(+)(out) + H(+)(in) = L-glutamine(in) + Na(+)(in) + H(+)(out). The catalysed reaction is L-asparagine(out) + Na(+)(out) + H(+)(in) = L-asparagine(in) + Na(+)(in) + H(+)(out). It carries out the reaction L-histidine(out) + Na(+)(out) + H(+)(in) = L-histidine(in) + Na(+)(in) + H(+)(out). The enzyme catalyses L-cysteine(out) + Na(+)(out) + H(+)(in) = L-cysteine(in) + Na(+)(in) + H(+)(out). Not inhibited by lithium. Partial allosteric regulation on ions sodium binding. Symporter that cotransports neutral amino acids and sodium ions, coupled to an H(+) antiporter activity. Releases L-glutamine and glycine from astroglial cells and may participate in the glutamate/GABA-L-glutamine cycle and the NMDA receptors activation. In addition, contributes significantly to L-glutamine uptake in retina, namely in ganglion and Mueller cells therefore, participates in the retinal glutamate-glutamine cycle. The transport activity is pH sensitive and Li(+) tolerant. Moreover functions in both direction and is associated with large uncoupled fluxes of protons. The transport is electroneutral coupled to the cotransport of 1 Na(+) and the antiport of 1 H(+). May have a particular importance for modulation of net hepatic glutamine flux. This is Sodium-coupled neutral amino acid transporter 5 (SLC38A5) from Homo sapiens (Human).